The sequence spans 811 residues: Zinc finger protein 839 (811 aa).

Residues 197 to 222 form a C2H2-type zinc finger; the sequence is FKCQTCEKSYIGKGGLARHFKLNPGH. 3 disordered regions span residues 329-349, 455-555, and 612-654; these read QRRA…RASP, PDNL…NGSV, and ALEH…AEAG. The span at 476-485 shows a compositional bias: basic and acidic residues; sequence SSEKREREAA. Positions 501–510 are enriched in polar residues; that stretch reads SNDTTESLAA.

This Homo sapiens (Human) protein is Zinc finger protein 839 (ZNF839).